Here is a 577-residue protein sequence, read N- to C-terminus: Arginine--tRNA ligase (577 aa).

The 'HIGH' region motif lies at 122–132 (PNVAKEMHVGH).

It belongs to the class-I aminoacyl-tRNA synthetase family. As to quaternary structure, monomer.

Its subcellular location is the cytoplasm. The catalysed reaction is tRNA(Arg) + L-arginine + ATP = L-arginyl-tRNA(Arg) + AMP + diphosphate. This is Arginine--tRNA ligase from Aliivibrio salmonicida (strain LFI1238) (Vibrio salmonicida (strain LFI1238)).